The primary structure comprises 318 residues: Methionyl-tRNA formyltransferase (318 aa).

Residue 112-115 (SILP) participates in (6S)-5,6,7,8-tetrahydrofolate binding.

It belongs to the Fmt family.

The enzyme catalyses L-methionyl-tRNA(fMet) + (6R)-10-formyltetrahydrofolate = N-formyl-L-methionyl-tRNA(fMet) + (6S)-5,6,7,8-tetrahydrofolate + H(+). Attaches a formyl group to the free amino group of methionyl-tRNA(fMet). The formyl group appears to play a dual role in the initiator identity of N-formylmethionyl-tRNA by promoting its recognition by IF2 and preventing the misappropriation of this tRNA by the elongation apparatus. This chain is Methionyl-tRNA formyltransferase, found in Shewanella baltica (strain OS185).